The primary structure comprises 399 residues: Myb-related transcription factor, partner of profilin (399 aa).

Residues 12–84 (TTRLRKPRFS…EVQKRWNDFK (73 aa)) enclose the Myb-like domain. Residues 83 to 86 (FKRR) carry the Nuclear localization signal motif. Disordered stretches follow at residues 87 to 108 (TKEK…AEDA), 127 to 261 (PGAG…PSLD), 297 to 332 (LLPG…PKVE), and 358 to 399 (APRS…WKSP). Residues 127–136 (PGAGAGAEEP) are compositionally biased toward low complexity. Residues 137–149 (PAAPSSQPPPPSA) show a composition bias toward pro residues. Residues 156-170 (LSEDRREDRRADTSA) show a composition bias toward basic and acidic residues. 3 stretches are compositionally biased toward pro residues: residues 219-252 (SPPP…PPPT), 305-329 (SLPP…PPAP), and 366-377 (PRPPPAPLPPHD). Basic residues predominate over residues 381–399 (HKRRKGFPTRKRRGRWKSP). Short sequence motifs (nuclear localization signal) lie at residues 382 to 385 (KRRK) and 390 to 393 (RKRR).

Interacts with PFN1. Homodimer and heterodimer with PFN1.

Its subcellular location is the nucleus. Its function is as follows. Transcriptional repressor; DNA-binding protein that specifically recognizes the core sequence 5'-YAAC[GT]G-3'. Dimerization with PFN1 reduces its DNA-binding capacity. The sequence is that of Myb-related transcription factor, partner of profilin (MYPOP) from Homo sapiens (Human).